Consider the following 236-residue polypeptide: Ribose-5-phosphate isomerase A (236 aa).

Substrate is bound by residues 28–31, 83–86, and 96–99; these read TGST, DGAD, and KGGG. Glu105 (proton acceptor) is an active-site residue. Lys123 contributes to the substrate binding site.

Belongs to the ribose 5-phosphate isomerase family. Homodimer.

It carries out the reaction aldehydo-D-ribose 5-phosphate = D-ribulose 5-phosphate. It functions in the pathway carbohydrate degradation; pentose phosphate pathway; D-ribose 5-phosphate from D-ribulose 5-phosphate (non-oxidative stage): step 1/1. In terms of biological role, catalyzes the reversible conversion of ribose-5-phosphate to ribulose 5-phosphate. This Methylorubrum populi (strain ATCC BAA-705 / NCIMB 13946 / BJ001) (Methylobacterium populi) protein is Ribose-5-phosphate isomerase A.